A 171-amino-acid polypeptide reads, in one-letter code: 3-hydroxydecanoyl-[acyl-carrier-protein] dehydratase (171 aa).

His-70 is an active-site residue.

The protein belongs to the thioester dehydratase family. FabA subfamily. Homodimer.

It localises to the cytoplasm. The enzyme catalyses a (3R)-hydroxyacyl-[ACP] = a (2E)-enoyl-[ACP] + H2O. It carries out the reaction (3R)-hydroxydecanoyl-[ACP] = (2E)-decenoyl-[ACP] + H2O. It catalyses the reaction (2E)-decenoyl-[ACP] = (3Z)-decenoyl-[ACP]. Its pathway is lipid metabolism; fatty acid biosynthesis. In terms of biological role, necessary for the introduction of cis unsaturation into fatty acids. Catalyzes the dehydration of (3R)-3-hydroxydecanoyl-ACP to E-(2)-decenoyl-ACP and then its isomerization to Z-(3)-decenoyl-ACP. Can catalyze the dehydratase reaction for beta-hydroxyacyl-ACPs with saturated chain lengths up to 16:0, being most active on intermediate chain length. In Shewanella pealeana (strain ATCC 700345 / ANG-SQ1), this protein is 3-hydroxydecanoyl-[acyl-carrier-protein] dehydratase.